We begin with the raw amino-acid sequence, 259 residues long: Adenosylcobinamide-GDP ribazoletransferase (259 aa).

5 consecutive transmembrane segments (helical) span residues 43–63, 64–84, 116–136, 141–161, and 185–205; these read LAGA…LGLG, ASSM…TGAL, FGVL…ASLV, PINV…LMVW, and TLYT…APVT.

It belongs to the CobS family. Mg(2+) serves as cofactor.

It is found in the cell inner membrane. It catalyses the reaction alpha-ribazole + adenosylcob(III)inamide-GDP = adenosylcob(III)alamin + GMP + H(+). The catalysed reaction is alpha-ribazole 5'-phosphate + adenosylcob(III)inamide-GDP = adenosylcob(III)alamin 5'-phosphate + GMP + H(+). Its pathway is cofactor biosynthesis; adenosylcobalamin biosynthesis; adenosylcobalamin from cob(II)yrinate a,c-diamide: step 7/7. Its function is as follows. Joins adenosylcobinamide-GDP and alpha-ribazole to generate adenosylcobalamin (Ado-cobalamin). Also synthesizes adenosylcobalamin 5'-phosphate from adenosylcobinamide-GDP and alpha-ribazole 5'-phosphate. The chain is Adenosylcobinamide-GDP ribazoletransferase from Allorhizobium ampelinum (strain ATCC BAA-846 / DSM 112012 / S4) (Agrobacterium vitis (strain S4)).